The sequence spans 369 residues: 4-hydroxy-3-methylbut-2-en-1-yl diphosphate synthase (flavodoxin) (369 aa).

[4Fe-4S] cluster contacts are provided by C270, C273, C305, and E312.

Belongs to the IspG family. The cofactor is [4Fe-4S] cluster.

The catalysed reaction is (2E)-4-hydroxy-3-methylbut-2-enyl diphosphate + oxidized [flavodoxin] + H2O + 2 H(+) = 2-C-methyl-D-erythritol 2,4-cyclic diphosphate + reduced [flavodoxin]. It functions in the pathway isoprenoid biosynthesis; isopentenyl diphosphate biosynthesis via DXP pathway; isopentenyl diphosphate from 1-deoxy-D-xylulose 5-phosphate: step 5/6. Functionally, converts 2C-methyl-D-erythritol 2,4-cyclodiphosphate (ME-2,4cPP) into 1-hydroxy-2-methyl-2-(E)-butenyl 4-diphosphate. The polypeptide is 4-hydroxy-3-methylbut-2-en-1-yl diphosphate synthase (flavodoxin) (Pseudomonas syringae pv. syringae (strain B728a)).